Here is a 345-residue protein sequence, read N- to C-terminus: MEKYSIRSNIVHKLDDNQPLLSERVTARLEAVNRNRVVKIVPQHRYNVRLTPSMLNRDGYINASLMEFSDVGQKYILTGIPSEDKVFAFWQMVLEQRSPTIIQFADNVEEKLEHYDKYFPDKGDVWSYGHLQVERKSYAIHQGNFHTRNFILRKGNETHRVLHFTVFGWTETTTPIMQDFLALRKVMKDTGALNMINPASALFRSTMRRYIHTPPSFAPIIQSARGSSRAGAFVVIDLLIRMIDGKKTNLYSVEDLIVKCKHMRIHCVPVALHHSFIYEAVLDYLLRRNPRFQDFKEPLIAYSESCFVKWSSMDKEIEKFINTKTWFLNESSRNKFLRSVMPPVV.

The Tyrosine-protein phosphatase domain maps to 33 to 284; the sequence is NRNRVVKIVP…SFIYEAVLDY (252 aa).

It belongs to the protein-tyrosine phosphatase family. In terms of tissue distribution, expressed in the 2 embryonic head hypodermal cells XXXL/R.

It localises to the cytoplasm. It is found in the cell membrane. In terms of biological role, together with eak-4 and phosphatase eak-6, negatively regulates dauer larva formation downstream of insulin-like receptor daf-2 and in parallel of age-1, pdk-1 and akt-1. The chain is Protein sdf-9 from Caenorhabditis elegans.